Consider the following 260-residue polypeptide: MRVYRMLRSRVIPVLLMREKGLVKTVKFKEGKYVGDPLNAVKIFNEQEADELTLLDIDASRLGHEPDYVLIERIASECRMPLCYGGGIKTVEQAERILKLGVEKVSLSSAVFENPKIITQLAERVGRQSIVVCLDVKKRLFGSKFDCFTINGTKKQSVDTIEFVKQIQTLGAGEIVLNFIDNDGVMKGYDLDAVSKFKALVKVPLTVVGGAGCVDDIAKLVQQEKLVGAAAGSLFVFKGKYKAVLINYPSPSEKKKALEL.

The active site involves Asp135.

This sequence belongs to the HisA/HisF family. As to quaternary structure, heterodimer of HisH and HisF.

It is found in the cytoplasm. It carries out the reaction 5-[(5-phospho-1-deoxy-D-ribulos-1-ylimino)methylamino]-1-(5-phospho-beta-D-ribosyl)imidazole-4-carboxamide + L-glutamine = D-erythro-1-(imidazol-4-yl)glycerol 3-phosphate + 5-amino-1-(5-phospho-beta-D-ribosyl)imidazole-4-carboxamide + L-glutamate + H(+). It functions in the pathway amino-acid biosynthesis; L-histidine biosynthesis; L-histidine from 5-phospho-alpha-D-ribose 1-diphosphate: step 5/9. In terms of biological role, IGPS catalyzes the conversion of PRFAR and glutamine to IGP, AICAR and glutamate. The HisF subunit catalyzes the cyclization activity that produces IGP and AICAR from PRFAR using the ammonia provided by the HisH subunit. The chain is Putative imidazole glycerol phosphate synthase subunit hisF3 (hisF3) from Vibrio vulnificus (strain YJ016).